The following is a 328-amino-acid chain: GTPase Obg (328 aa).

The Obg domain maps to 2 to 160 (YNFKDSVSIT…LNVRLELFLV (159 aa)). Residues 161–326 (ADIGLVGLPN…LIKEFFVLAK (166 aa)) form the OBG-type G domain. Residues 167 to 174 (GLPNAGKS), 192 to 196 (FTTKI), 213 to 216 (DIPG), 280 to 283 (NKLD), and 307 to 309 (SIY) contribute to the GTP site. Positions 174 and 194 each coordinate Mg(2+).

This sequence belongs to the TRAFAC class OBG-HflX-like GTPase superfamily. OBG GTPase family. Monomer. Mg(2+) is required as a cofactor.

The protein resides in the cytoplasm. In terms of biological role, an essential GTPase which binds GTP, GDP and possibly (p)ppGpp with moderate affinity, with high nucleotide exchange rates and a fairly low GTP hydrolysis rate. Plays a role in control of the cell cycle, stress response, ribosome biogenesis and in those bacteria that undergo differentiation, in morphogenesis control. This Borreliella afzelii (strain PKo) (Borrelia afzelii) protein is GTPase Obg.